We begin with the raw amino-acid sequence, 981 residues long: Helicase-like transcription factor CHR28 (981 aa).

2 disordered regions span residues 1–66 (MDSA…LDSR) and 112–194 (KRTH…RNSE). Polar residues predominate over residues 46–65 (SGSSSGANGHTKTGLTNLDS). Residues 119–128 (FSRPPFPPRP) show a composition bias toward pro residues. The span at 166–176 (HGTSASPSHFN) shows a compositional bias: polar residues. Residues 181–194 (PMHRNGIGEERNSE) show a composition bias toward basic and acidic residues. A Helicase ATP-binding domain is found at 241–526 (ETNSLHCMGG…YSYFRFLKYD (286 aa)). 254–261 (DDQGLGKT) is a binding site for ATP. Disordered stretches follow at residues 293-337 (DADD…RKFN) and 439-462 (VVGT…SDPD). Positions 439–451 (VVGTTKKSKKKKG) are enriched in basic residues. Residues 679 to 718 (CCVCHDPPEDPVVTLCGHIFCYQCVSDYITGDEDTCPAPR) form an RING-type; degenerate zinc finger. The segment covering 779-798 (NQGTSNSTQNGQMASSSQQP) has biased composition (polar residues). The interval 779–808 (NQGTSNSTQNGQMASSSQQPNDDDDDDDDD) is disordered. A compositionally biased stretch (acidic residues) spans 799-808 (NDDDDDDDDD). Residues 804–976 (DDDDDVTIVE…ATRLTVDDLK (173 aa)) form the Helicase C-terminal domain.

The protein belongs to the SNF2/RAD54 helicase family. RAD16 subfamily. Interacts with SUVR2.

It is found in the nucleus. Probable helicase-like transcription factor involved in transcriptional gene silencing. Associates with SUVR2 and contributes to transcriptional gene silencing at RNA-directed DNA methylation (RdDM) target loci but also at RdDM-independent target loci. May be involved in nucleosome positioning to form ordered nucleosome arrays on chromatin. Associates with SUVR2 and functions redundantly with FRG1. Required for the efficient methylation of a broad range of RdDM target loci. This Arabidopsis thaliana (Mouse-ear cress) protein is Helicase-like transcription factor CHR28.